A 509-amino-acid chain; its full sequence is AAA ATPase forming ring-shaped complexes (509 aa).

Residues Ala11–Ala50 are a coiled coil. Gly236–Leu241 serves as a coordination point for ATP.

Belongs to the AAA ATPase family. In terms of assembly, homohexamer. Assembles into a hexameric ring structure.

The protein is AAA ATPase forming ring-shaped complexes of Corynebacterium diphtheriae (strain ATCC 700971 / NCTC 13129 / Biotype gravis).